The sequence spans 297 residues: Bifunctional protein FolD (297 aa).

Residues 168–170 (GRS), Thr-197, and Val-238 contribute to the NADP(+) site.

It belongs to the tetrahydrofolate dehydrogenase/cyclohydrolase family. Homodimer.

The catalysed reaction is (6R)-5,10-methylene-5,6,7,8-tetrahydrofolate + NADP(+) = (6R)-5,10-methenyltetrahydrofolate + NADPH. The enzyme catalyses (6R)-5,10-methenyltetrahydrofolate + H2O = (6R)-10-formyltetrahydrofolate + H(+). The protein operates within one-carbon metabolism; tetrahydrofolate interconversion. Catalyzes the oxidation of 5,10-methylenetetrahydrofolate to 5,10-methenyltetrahydrofolate and then the hydrolysis of 5,10-methenyltetrahydrofolate to 10-formyltetrahydrofolate. The polypeptide is Bifunctional protein FolD (Lawsonia intracellularis (strain PHE/MN1-00)).